A 367-amino-acid polypeptide reads, in one-letter code: Histidinol-phosphate aminotransferase (367 aa).

K227 carries the post-translational modification N6-(pyridoxal phosphate)lysine.

This sequence belongs to the class-II pyridoxal-phosphate-dependent aminotransferase family. Histidinol-phosphate aminotransferase subfamily. Homodimer. Pyridoxal 5'-phosphate is required as a cofactor.

It carries out the reaction L-histidinol phosphate + 2-oxoglutarate = 3-(imidazol-4-yl)-2-oxopropyl phosphate + L-glutamate. The protein operates within amino-acid biosynthesis; L-histidine biosynthesis; L-histidine from 5-phospho-alpha-D-ribose 1-diphosphate: step 7/9. The polypeptide is Histidinol-phosphate aminotransferase (Leptospira borgpetersenii serovar Hardjo-bovis (strain JB197)).